Here is a 22-residue protein sequence, read N- to C-terminus: Unknown endosperm protein L (22 aa).

The segment covering 1–11 (MRHSNKIRDEE) has biased composition (basic and acidic residues). Positions 1–22 (MRHSNKIRDEEMVNNTRLNXXA) are disordered. Residues 13-22 (VNNTRLNXXA) show a composition bias toward polar residues.

In terms of processing, the N-terminus is blocked.

This chain is Unknown endosperm protein L, found in Hordeum vulgare (Barley).